Reading from the N-terminus, the 244-residue chain is Krueppel-like factor 9 (244 aa).

The disordered stretch occupies residues 80-142 (SVCSDSLESP…AKGKHASEKR (63 aa)). Residue Ser122 is modified to Phosphoserine. 3 C2H2-type zinc fingers span residues 143–167 (HKCPYSGCGKVYGKSSHLKAHYRVH), 173–197 (FPCTWPDCLKKFSRSDELTRHYRTH), and 203–225 (FRCPLCEKRFMRSDHLTKHARRH).

It belongs to the Sp1 C2H2-type zinc-finger protein family. In terms of assembly, interacts with ZZEF1. In terms of tissue distribution, epidermis (at protein level).

Its subcellular location is the nucleus. Functionally, transcription factor that binds to GC box promoter elements. Selectively activates mRNA synthesis from genes containing tandem repeats of GC boxes but represses genes with a single GC box. Acts as an epidermal circadian transcription factor regulating keratinocyte proliferation. This chain is Krueppel-like factor 9 (KLF9), found in Homo sapiens (Human).